Reading from the N-terminus, the 486-residue chain is Siroheme synthase (486 aa).

Residues 1 to 203 (MNYFPIFANL…RQNTLAEREL (203 aa)) are precorrin-2 dehydrogenase /sirohydrochlorin ferrochelatase. NAD(+)-binding positions include 22 to 23 (AV) and 43 to 44 (KH). S128 is modified (phosphoserine). Residues 217–486 (GSVSLVGAGP…LGTGQEQQAA (270 aa)) form a uroporphyrinogen-III C-methyltransferase region. P226 provides a ligand contact to S-adenosyl-L-methionine. The active-site Proton acceptor is D249. Residue K271 is the Proton donor of the active site. S-adenosyl-L-methionine is bound by residues 302 to 304 (GGD), V307, 332 to 333 (TA), M384, and G413.

This sequence in the N-terminal section; belongs to the precorrin-2 dehydrogenase / sirohydrochlorin ferrochelatase family. In the C-terminal section; belongs to the precorrin methyltransferase family.

It carries out the reaction uroporphyrinogen III + 2 S-adenosyl-L-methionine = precorrin-2 + 2 S-adenosyl-L-homocysteine + H(+). It catalyses the reaction precorrin-2 + NAD(+) = sirohydrochlorin + NADH + 2 H(+). The enzyme catalyses siroheme + 2 H(+) = sirohydrochlorin + Fe(2+). It functions in the pathway cofactor biosynthesis; adenosylcobalamin biosynthesis; precorrin-2 from uroporphyrinogen III: step 1/1. Its pathway is cofactor biosynthesis; adenosylcobalamin biosynthesis; sirohydrochlorin from precorrin-2: step 1/1. It participates in porphyrin-containing compound metabolism; siroheme biosynthesis; precorrin-2 from uroporphyrinogen III: step 1/1. The protein operates within porphyrin-containing compound metabolism; siroheme biosynthesis; siroheme from sirohydrochlorin: step 1/1. It functions in the pathway porphyrin-containing compound metabolism; siroheme biosynthesis; sirohydrochlorin from precorrin-2: step 1/1. Its function is as follows. Multifunctional enzyme that catalyzes the SAM-dependent methylations of uroporphyrinogen III at position C-2 and C-7 to form precorrin-2 via precorrin-1. Then it catalyzes the NAD-dependent ring dehydrogenation of precorrin-2 to yield sirohydrochlorin. Finally, it catalyzes the ferrochelation of sirohydrochlorin to yield siroheme. This Neisseria meningitidis serogroup A / serotype 4A (strain DSM 15465 / Z2491) protein is Siroheme synthase.